Reading from the N-terminus, the 420-residue chain is D-tagatose-1,6-bisphosphate aldolase subunit GatZ (420 aa).

This sequence belongs to the GatZ/KbaZ family. GatZ subfamily. As to quaternary structure, forms a complex with GatY.

The protein operates within carbohydrate metabolism; D-tagatose 6-phosphate degradation; D-glyceraldehyde 3-phosphate and glycerone phosphate from D-tagatose 6-phosphate: step 2/2. Functionally, component of the tagatose-1,6-bisphosphate aldolase GatYZ that is required for full activity and stability of the Y subunit. Could have a chaperone-like function for the proper and stable folding of GatY. When expressed alone, GatZ does not show any aldolase activity. Is involved in the catabolism of galactitol. In Escherichia coli O6:H1 (strain CFT073 / ATCC 700928 / UPEC), this protein is D-tagatose-1,6-bisphosphate aldolase subunit GatZ.